The following is a 628-amino-acid chain: Neutral/alkaline invertase 1, mitochondrial (628 aa).

The N-terminal 35 residues, 1–35, are a transit peptide targeting the mitochondrion; the sequence is MAAAAISHLRRGAPRHARALLYLSTRRFSSSSAAG. The segment covering 79–90 has biased composition (low complexity); sequence ASSAPPLESPPI. Residues 79–113 are disordered; that stretch reads ASSAPPLESPPIEELPDDATPPPEEEPGLPAPEKD.

Belongs to the glycosyl hydrolase 100 family. Expressed in roots, leaf and stems.

The protein resides in the mitochondrion. The enzyme catalyses Hydrolysis of terminal non-reducing beta-D-fructofuranoside residues in beta-D-fructofuranosides.. In terms of biological role, mitochondrial invertase that cleaves sucrose into glucose and fructose. The chain is Neutral/alkaline invertase 1, mitochondrial from Oryza sativa subsp. japonica (Rice).